A 144-amino-acid polypeptide reads, in one-letter code: Large ribosomal subunit protein uL15 (144 aa).

A disordered region spans residues 1–44 (MKLNELMPSEGSRTNRKRIGRGTSSGTGKTAGRGQKGQKARGKV). The segment covering 23–35 (TSSGTGKTAGRGQ) has biased composition (gly residues).

It belongs to the universal ribosomal protein uL15 family. In terms of assembly, part of the 50S ribosomal subunit.

In terms of biological role, binds to the 23S rRNA. This Pediococcus pentosaceus (strain ATCC 25745 / CCUG 21536 / LMG 10740 / 183-1w) protein is Large ribosomal subunit protein uL15.